The primary structure comprises 335 residues: Pyridoxal 5'-phosphate synthase subunit PdxS (335 aa).

Position 59 (D59) interacts with D-ribose 5-phosphate. K116 acts as the Schiff-base intermediate with D-ribose 5-phosphate in catalysis. G188 serves as a coordination point for D-ribose 5-phosphate. K200 serves as a coordination point for D-glyceraldehyde 3-phosphate. Residues G253 and 274–275 (GS) each bind D-ribose 5-phosphate.

The protein belongs to the PdxS/SNZ family. In terms of assembly, in the presence of PdxT, forms a dodecamer of heterodimers.

The catalysed reaction is aldehydo-D-ribose 5-phosphate + D-glyceraldehyde 3-phosphate + L-glutamine = pyridoxal 5'-phosphate + L-glutamate + phosphate + 3 H2O + H(+). It functions in the pathway cofactor biosynthesis; pyridoxal 5'-phosphate biosynthesis. Functionally, catalyzes the formation of pyridoxal 5'-phosphate from ribose 5-phosphate (RBP), glyceraldehyde 3-phosphate (G3P) and ammonia. The ammonia is provided by the PdxT subunit. Can also use ribulose 5-phosphate and dihydroxyacetone phosphate as substrates, resulting from enzyme-catalyzed isomerization of RBP and G3P, respectively. This Hyperthermus butylicus (strain DSM 5456 / JCM 9403 / PLM1-5) protein is Pyridoxal 5'-phosphate synthase subunit PdxS.